Consider the following 532-residue polypeptide: Bifunctional purine biosynthesis protein PurH (532 aa).

The region spanning 1–149 (MTDPAPLTRA…KNHGAVTVLT (149 aa)) is the MGS-like domain.

Belongs to the PurH family.

It catalyses the reaction (6R)-10-formyltetrahydrofolate + 5-amino-1-(5-phospho-beta-D-ribosyl)imidazole-4-carboxamide = 5-formamido-1-(5-phospho-D-ribosyl)imidazole-4-carboxamide + (6S)-5,6,7,8-tetrahydrofolate. It carries out the reaction IMP + H2O = 5-formamido-1-(5-phospho-D-ribosyl)imidazole-4-carboxamide. It functions in the pathway purine metabolism; IMP biosynthesis via de novo pathway; 5-formamido-1-(5-phospho-D-ribosyl)imidazole-4-carboxamide from 5-amino-1-(5-phospho-D-ribosyl)imidazole-4-carboxamide (10-formyl THF route): step 1/1. Its pathway is purine metabolism; IMP biosynthesis via de novo pathway; IMP from 5-formamido-1-(5-phospho-D-ribosyl)imidazole-4-carboxamide: step 1/1. This is Bifunctional purine biosynthesis protein PurH from Jannaschia sp. (strain CCS1).